We begin with the raw amino-acid sequence, 251 residues long: Transcriptional cofactor Bfc (251 aa).

Interacts with srp (via GATA-type Zn-finger domain); this interaction enhances srp binding to the promoter of crq/croquemort.

It localises to the nucleus. Its function is as follows. Transcriptional cofactor involved in efferocytosis. Together with srp mediates expression of the phagocytic receptor crq/croquemort in response to apoptotic cells, and is up-regulated by crq/croquemort in a positive feedback mechanism. Involved in macrophage engulfment and clearance of apoptotic cells during embryogenesis. This is Transcriptional cofactor Bfc from Drosophila melanogaster (Fruit fly).